Here is a 418-residue protein sequence, read N- to C-terminus: Light-independent protochlorophyllide reductase subunit N (418 aa).

[4Fe-4S] cluster is bound by residues C17, C42, and C103.

This sequence belongs to the BchN/ChlN family. In terms of assembly, protochlorophyllide reductase is composed of three subunits; ChlL, ChlN and ChlB. Forms a heterotetramer of two ChlB and two ChlN subunits. [4Fe-4S] cluster is required as a cofactor.

The enzyme catalyses chlorophyllide a + oxidized 2[4Fe-4S]-[ferredoxin] + 2 ADP + 2 phosphate = protochlorophyllide a + reduced 2[4Fe-4S]-[ferredoxin] + 2 ATP + 2 H2O. It functions in the pathway porphyrin-containing compound metabolism; chlorophyll biosynthesis (light-independent). Its function is as follows. Component of the dark-operative protochlorophyllide reductase (DPOR) that uses Mg-ATP and reduced ferredoxin to reduce ring D of protochlorophyllide (Pchlide) to form chlorophyllide a (Chlide). This reaction is light-independent. The NB-protein (ChlN-ChlB) is the catalytic component of the complex. The protein is Light-independent protochlorophyllide reductase subunit N of Prochlorococcus marinus (strain MIT 9211).